Here is a 622-residue protein sequence, read N- to C-terminus: Low affinity potassium transport system protein Kup (622 aa).

Helical transmembrane passes span 9–29 (LPAV…TSPL), 49–69 (VFGF…LKYL), 101–121 (VLVI…VITP), 137–157 (PSMD…LFII), 165–185 (VGKL…VLGA), 212–232 (AVSF…EALY), 247–267 (WFTV…ALLL), 279–299 (LLAP…ATII), 337–357 (IYIP…IVSF), 363–383 (LAAA…ILFC), 397–417 (AWVL…ANVV), and 419–439 (ILSG…IMTT).

It belongs to the HAK/KUP transporter (TC 2.A.72) family.

It is found in the cell inner membrane. The catalysed reaction is K(+)(in) + H(+)(in) = K(+)(out) + H(+)(out). In terms of biological role, responsible for the low-affinity transport of potassium into the cell. Likely operates as a K(+):H(+) symporter. The sequence is that of Low affinity potassium transport system protein Kup from Pectobacterium carotovorum subsp. carotovorum (strain PC1).